The chain runs to 371 residues: 2-aminoethylphosphonate--pyruvate transaminase (371 aa).

At Lys195 the chain carries N6-(pyridoxal phosphate)lysine.

Belongs to the class-V pyridoxal-phosphate-dependent aminotransferase family. PhnW subfamily. As to quaternary structure, homodimer. Requires pyridoxal 5'-phosphate as cofactor.

The catalysed reaction is (2-aminoethyl)phosphonate + pyruvate = phosphonoacetaldehyde + L-alanine. Involved in phosphonate degradation. The polypeptide is 2-aminoethylphosphonate--pyruvate transaminase (Pseudomonas aeruginosa (strain UCBPP-PA14)).